The primary structure comprises 562 residues: MRSDMIKKGDHQAPARSLLHATGALKSPTDMNKPFVAICNSYIDIVPGHVHLRELADIAKEAIREAGAIPFEFNTIGVDDGIAMGHIGMRYSLPSREIIADAAETVINAHWFDGVFYIPNCDKITPGMILAAMRTNVPAIFCSGGPMKAGLSAHGKALTLSSMFEAVGAFKEGSISKEEFLDMEQNACPTCGSCAGMFTANSMNCLMEVLGLALPYNGTALAVSDQRREMIRQAAFKLVENIKNDLKPRDIVTREAIDDAFALDMAMGGSTNTVLHTLAIANEAGIDYDLERINAIAKRTPYLSKIAPSSSYSMHDVHEAGGVPAIINELMKKDGTLHPDRITVTGKTLRENNEGKEIKNFDVIHPLDAPYDAQGGLSILFGNIAPKGAVIKVGGVDPSIKTFTGKAICFNSHDEAVEAIDNRTVRAGHVVVIRYEGPKGGPGMPEMLAPTSSIVGRGLGKDVALITDGRFSGATRGIAVGHISPEAASGGPIALIEDGDEITIDLTNRTLNVNQPEDVLARRRESLTPFKAKVKTGYLARYTALVTSANTGGVMQVPENLI.

Position 80 (Asp80) interacts with Mg(2+). Position 121 (Cys121) interacts with [2Fe-2S] cluster. 2 residues coordinate Mg(2+): Asp122 and Lys123. Lys123 bears the N6-carboxylysine mark. Cys194 serves as a coordination point for [2Fe-2S] cluster. Glu446 serves as a coordination point for Mg(2+). The Proton acceptor role is filled by Ser472.

It belongs to the IlvD/Edd family. In terms of assembly, homodimer. [2Fe-2S] cluster is required as a cofactor. It depends on Mg(2+) as a cofactor.

It catalyses the reaction (2R)-2,3-dihydroxy-3-methylbutanoate = 3-methyl-2-oxobutanoate + H2O. The enzyme catalyses (2R,3R)-2,3-dihydroxy-3-methylpentanoate = (S)-3-methyl-2-oxopentanoate + H2O. The protein operates within amino-acid biosynthesis; L-isoleucine biosynthesis; L-isoleucine from 2-oxobutanoate: step 3/4. It participates in amino-acid biosynthesis; L-valine biosynthesis; L-valine from pyruvate: step 3/4. Functionally, functions in the biosynthesis of branched-chain amino acids. Catalyzes the dehydration of (2R,3R)-2,3-dihydroxy-3-methylpentanoate (2,3-dihydroxy-3-methylvalerate) into 2-oxo-3-methylpentanoate (2-oxo-3-methylvalerate) and of (2R)-2,3-dihydroxy-3-methylbutanoate (2,3-dihydroxyisovalerate) into 2-oxo-3-methylbutanoate (2-oxoisovalerate), the penultimate precursor to L-isoleucine and L-valine, respectively. This Staphylococcus aureus (strain Mu50 / ATCC 700699) protein is Dihydroxy-acid dehydratase.